A 65-amino-acid chain; its full sequence is Large ribosomal subunit protein bL35 (65 aa).

This sequence belongs to the bacterial ribosomal protein bL35 family.

In Magnetococcus marinus (strain ATCC BAA-1437 / JCM 17883 / MC-1), this protein is Large ribosomal subunit protein bL35.